Reading from the N-terminus, the 114-residue chain is Probable acid stress chaperone HdeA (114 aa).

Residues 1-26 form the signal peptide; that stretch reads MIKALFNKNTALAAVTILALSGGAMA. C46 and C94 are joined by a disulfide.

Belongs to the HdeA family.

It localises to the periplasm. Functionally, required for optimal acid stress protection. Exhibits a chaperone-like activity only at low pH by suppressing non-specifically the aggregation of denaturated periplasmic proteins. This is Probable acid stress chaperone HdeA from Brucella suis biovar 1 (strain 1330).